A 146-amino-acid chain; its full sequence is Hemoglobin subunit beta (146 aa).

The 145-residue stretch at 2–146 folds into the Globin domain; that stretch reads HWSAEEKQLI…VAHALARKYH (145 aa). Heme b contacts are provided by H63 and H92.

This sequence belongs to the globin family. In terms of assembly, heterotetramer of two alpha chains and two beta chains. As to expression, red blood cells.

Involved in oxygen transport from the lung to the various peripheral tissues. In Anser anser anser (Western greylag goose), this protein is Hemoglobin subunit beta (HBB).